The sequence spans 207 residues: Large ribosomal subunit protein uL4 (207 aa).

The segment at 50–76 (KTKTVSEVSGTTKKPFKQKGTGNARQG) is disordered.

It belongs to the universal ribosomal protein uL4 family. Part of the 50S ribosomal subunit.

In terms of biological role, one of the primary rRNA binding proteins, this protein initially binds near the 5'-end of the 23S rRNA. It is important during the early stages of 50S assembly. It makes multiple contacts with different domains of the 23S rRNA in the assembled 50S subunit and ribosome. Its function is as follows. Forms part of the polypeptide exit tunnel. The chain is Large ribosomal subunit protein uL4 from Rickettsia canadensis (strain McKiel).